Consider the following 290-residue polypeptide: MRIADYSVTRAILERHGFTFKKSFGQNFLTDTNILQKIVDTAEIDKKVNVIEIGPGIGALTEFLAESAAEVMAFEIDDRLVPILADTLRDFDNVTVVNQDILKVNLAQYIAEFKNPDLPIKVVANLPYYITTPILMHLIESGIPFSEFVVMMQREVADRISAQPNTKAYGSLSIAVQYYMTAKVAFIVPRKVFVPAPNVDSAILKMVRRERPAVEVQDEKFFFKVSKASFVHRRKTLWNNLTSYFGKSEETKGKLTAALERAELSPSVRGEALSLEEFACLADALKSEGL.

Positions 27, 29, 54, 75, 100, and 125 each coordinate S-adenosyl-L-methionine.

Belongs to the class I-like SAM-binding methyltransferase superfamily. rRNA adenine N(6)-methyltransferase family. RsmA subfamily.

It is found in the cytoplasm. The enzyme catalyses adenosine(1518)/adenosine(1519) in 16S rRNA + 4 S-adenosyl-L-methionine = N(6)-dimethyladenosine(1518)/N(6)-dimethyladenosine(1519) in 16S rRNA + 4 S-adenosyl-L-homocysteine + 4 H(+). Its function is as follows. Specifically dimethylates two adjacent adenosines (A1518 and A1519) in the loop of a conserved hairpin near the 3'-end of 16S rRNA in the 30S particle. May play a critical role in biogenesis of 30S subunits. This Streptococcus sanguinis (strain SK36) protein is Ribosomal RNA small subunit methyltransferase A.